We begin with the raw amino-acid sequence, 223 residues long: MEDVKLEFPSLPQCKEDAEEWTYPMRREMQEILPGLFLGPYSSAMKSKLPVLQKHGITHIICIRQNIEANFIKPNFQQLFRYLVLDIADNPVENIIRFFPMTKEFIDGSLQMGGKVLVHGNAGISRSAAFVIAYIMETFGMKYRDAFAYVQERRFCINPNAGFVHQLQEYEAIYLAKLTIQMMSPLQIERSLSVHSGTTGSLKRTHEEEDDFGTMQVATAQNG.

One can recognise a Tyrosine-protein phosphatase domain in the interval 28–176 (EMQEILPGLF…LQEYEAIYLA (149 aa)). An Interaction with FBXW7 motif is present at residues 76 to 78 (FQQ). Phosphoserine occurs at positions 184, 193, and 201. A disordered region spans residues 197–223 (GTTGSLKRTHEEEDDFGTMQVATAQNG).

It belongs to the protein-tyrosine phosphatase family. Non-receptor class subfamily. As to quaternary structure, interacts with MAPK1; independently of MAPK1 phosphorylation status. Interacts with CARHSP1/Crhsp-24. Interacts (via FQQ motif) with FBXW7 isoforms 1 (via F-box domain) and 3 (via F-box domain); the interaction is direct and prevents FBXW7 interaction with SKP1, a component of the SCF(FBXW7) complex. Does not interact with FBXW7 isoform 2.

It is found in the nucleus. Its subcellular location is the cytoplasm. It localises to the cytosol. Catalytically inactive phosphatase. Acts as a nuclear anchor for MAPK1/MAPK3 (ERK1/ERK2). Modulates cell-fate decisions and cell migration by spatiotemporal regulation of MAPK1/MAPK3 (ERK1/ERK2). By binding to the F-box of FBXW7, prevents the assembly of FBXW7 into the SCF E3 ubiquitin-protein ligase complex, and thereby inhibits degradation of its substrates. Plays a role in spermatogenesis. The chain is Serine/threonine/tyrosine-interacting protein from Homo sapiens (Human).